The sequence spans 176 residues: Pro-glucagon (176 aa).

Residues 1–20 (MKSLYFVAGLLVMLAQGSWQ) form the signal peptide. Polar residues predominate over residues 25-35 (NTEEKSSSFPA). The disordered stretch occupies residues 25-59 (NTEEKSSSFPAPQTDPLGDPDQISEDKRHSQGTFT). Serine 54 carries the phosphoserine modification. A propeptide spanning residues 84–89 (NKNNIA) is cleaved from the precursor. Serine 105 and serine 108 each carry phosphoserine. Position 127 is an arginine amide (arginine 127). Positions 131–145 (DFPEEVNIVEELRRR) are excised as a propeptide. Phosphoserine occurs at positions 150 and 152.

Belongs to the glucagon family. In terms of processing, proglucagon is post-translationally processed in a tissue-specific manner in pancreatic A cells and intestinal L cells. In pancreatic A cells, the major bioactive hormone is glucagon cleaved by PCSK2/PC2. In the intestinal L cells PCSK1/PC1 liberates GLP-1, GLP-2, glicentin and oxyntomodulin. GLP-1 is further N-terminally truncated by post-translational processing in the intestinal L cells resulting in GLP-1(7-37) GLP-1-(7-36)amide. The C-terminal amidation is neither important for the metabolism of GLP-1 nor for its effects on the endocrine pancreas. In terms of tissue distribution, glucagon is secreted in the A cells of the islets of Langerhans. GLP-1, GLP-2, oxyntomodulin and glicentin are secreted from enteroendocrine cells throughout the gastrointestinal tract. GLP-1 and GLP-2 are also secreted in selected neurons in the brain.

It localises to the secreted. Functionally, plays a key role in glucose metabolism and homeostasis. Regulates blood glucose by increasing gluconeogenesis and decreasing glycolysis. A counterregulatory hormone of insulin, raises plasma glucose levels in response to insulin-induced hypoglycemia. Plays an important role in initiating and maintaining hyperglycemic conditions in diabetes. Its function is as follows. Potent stimulator of glucose-dependent insulin release. Also stimulates insulin release in response to IL6. Plays important roles on gastric motility and the suppression of plasma glucagon levels. May be involved in the suppression of satiety and stimulation of glucose disposal in peripheral tissues, independent of the actions of insulin. Has growth-promoting activities on intestinal epithelium. May also regulate the hypothalamic pituitary axis (HPA) via effects on LH, TSH, CRH, oxytocin, and vasopressin secretion. Increases islet mass through stimulation of islet neogenesis and pancreatic beta cell proliferation. Inhibits beta cell apoptosis. Stimulates intestinal growth and up-regulates villus height in the small intestine, concomitant with increased crypt cell proliferation and decreased enterocyte apoptosis. The gastrointestinal tract, from the stomach to the colon is the principal target for GLP-2 action. Plays a key role in nutrient homeostasis, enhancing nutrient assimilation through enhanced gastrointestinal function, as well as increasing nutrient disposal. Stimulates intestinal glucose transport and decreases mucosal permeability. In terms of biological role, significantly reduces food intake. Inhibits gastric emptying in humans. Suppression of gastric emptying may lead to increased gastric distension, which may contribute to satiety by causing a sensation of fullness. Functionally, may modulate gastric acid secretion and the gastro-pyloro-duodenal activity. May play an important role in intestinal mucosal growth in the early period of life. The protein is Pro-glucagon (GCG) of Ovis aries (Sheep).